The sequence spans 228 residues: R-spondin-4 (228 aa).

Positions Met1 to Ala19 are cleaved as a signal peptide. An N-linked (GlcNAc...) asparagine glycan is attached at Asn34. 11 disulfide bridges follow: Cys35–Cys41, Cys38–Cys47, Cys50–Cys69, Cys73–Cys88, Cys91–Cys98, Cys95–Cys104, Cys107–Cys118, Cys122–Cys135, Cys139–Cys181, Cys150–Cys157, and Cys190–Cys196. The stretch at Ala85–Thr128 is one FU repeat. One can recognise a TSP type-1 domain in the interval Glu138 to Pro197. A disordered region spans residues Lys193–Gln228. A compositionally biased stretch (basic residues) spans Arg203–Gln228.

The protein belongs to the R-spondin family. Binds heparin. Interacts with LGR4, LGR5 and LGR6.

It localises to the secreted. Activator of the canonical Wnt signaling pathway by acting as a ligand for LGR4-6 receptors. Upon binding to LGR4-6 (LGR4, LGR5 or LGR6), LGR4-6 associate with phosphorylated LRP6 and frizzled receptors that are activated by extracellular Wnt receptors, triggering the canonical Wnt signaling pathway to increase expression of target genes. Also regulates the canonical Wnt/beta-catenin-dependent pathway and non-canonical Wnt signaling by acting as an inhibitor of ZNRF3, an important regulator of the Wnt signaling pathway. In Mus musculus (Mouse), this protein is R-spondin-4 (Rspo4).